Reading from the N-terminus, the 130-residue chain is Small ribosomal subunit protein uS9 (130 aa).

The protein belongs to the universal ribosomal protein uS9 family.

This chain is Small ribosomal subunit protein uS9, found in Idiomarina loihiensis (strain ATCC BAA-735 / DSM 15497 / L2-TR).